Consider the following 202-residue polypeptide: Dephospho-CoA kinase (202 aa).

The DPCK domain occupies 4–201 (VIGLTGGIAS…QKYLAMSKQN (198 aa)). Residue 12–17 (ASGKTT) coordinates ATP.

Belongs to the CoaE family.

The protein resides in the cytoplasm. The catalysed reaction is 3'-dephospho-CoA + ATP = ADP + CoA + H(+). It participates in cofactor biosynthesis; coenzyme A biosynthesis; CoA from (R)-pantothenate: step 5/5. Catalyzes the phosphorylation of the 3'-hydroxyl group of dephosphocoenzyme A to form coenzyme A. The polypeptide is Dephospho-CoA kinase (Vibrio vulnificus (strain YJ016)).